A 204-amino-acid polypeptide reads, in one-letter code: Histone chaperone ASF1A (204 aa).

The interaction with histone H3, CHAF1B, and HIRA stretch occupies residues Met1–Asn156. The short motif at Ile31–Asp37 is the Required for interaction with HIRA element. Residues Asp155–Met204 form a required for interaction with HIRA region. Phosphoserine is present on Ser192.

Belongs to the ASF1 family. As to quaternary structure, interacts with histone H3 (via C-terminus), including histone H3.1, H3.2 and H3.3, and histone H4; the interaction with H3 is direct. Probably interacts with the heterodimeric form of H3-H4 taking the place of the second dimer. Interacts with the CHAF1A, CHAF1B and RBBP4 subunits of the CAF-1 complex. Interacts with CABIN1, HAT1, HIRA, NASP, TAF1 and UBN1. Found in a soluble complex with NASP and histones H3 and H4; the interaction with NASP is probably indirect and mediated by H3-H4. Interacts with CDAN1. Found in a cytosolic complex with IPO4 and histones H3 and H4. Interacts with CREBBP. Phosphorylated by TLK1 and TLK2. Highly phosphorylated in S-phase and at lower levels in M-phase. TLK2-mediated phosphorylation at Ser-192 prevents proteasome-dependent degradation. Phosphorylation at Ser-192 by PRKDC in response to DNA damage promotes the histone chaperone activity and ability to replace histones at double-strand breaks (DSBs) at stalled or collapsed replication forks, leading to RAD51 recruitment.

The protein resides in the nucleus. Its subcellular location is the chromosome. Histone chaperone that facilitates histone deposition and histone exchange and removal during nucleosome assembly and disassembly. Cooperates with chromatin assembly factor 1 (CAF-1) to promote replication-dependent chromatin assembly and with HIRA to promote replication-independent chromatin assembly. Promotes homologous recombination-mediated repair of double-strand breaks (DSBs) at stalled or collapsed replication forks: acts by mediating histone replacement at DSBs, leading to recruitment of the MMS22L-TONSL complex and subsequent loading of RAD51. Also involved in the nuclear import of the histone H3-H4 dimer together with importin-4 (IPO4): specifically recognizes and binds newly synthesized histones with the monomethylation of H3 'Lys-9' and acetylation at 'Lys-14' (H3K9me1K14ac) marks, and diacetylation at 'Lys-5' and 'Lys-12' of H4 (H4K5K12ac) marks in the cytosol. Required for the formation of senescence-associated heterochromatin foci (SAHF) and efficient senescence-associated cell cycle exit. The chain is Histone chaperone ASF1A from Mus musculus (Mouse).